Consider the following 246-residue polypeptide: Octanoyltransferase (246 aa).

The region spanning 30-227 (GRIGNTLLLL…QFGRVFGHQV (198 aa)) is the BPL/LPL catalytic domain. Substrate contacts are provided by residues 75–82 (RGGDVTYH), 155–157 (AIG), and 168–170 (GFA). Cys-186 acts as the Acyl-thioester intermediate in catalysis.

It belongs to the LipB family.

It is found in the cytoplasm. The enzyme catalyses octanoyl-[ACP] + L-lysyl-[protein] = N(6)-octanoyl-L-lysyl-[protein] + holo-[ACP] + H(+). The protein operates within protein modification; protein lipoylation via endogenous pathway; protein N(6)-(lipoyl)lysine from octanoyl-[acyl-carrier-protein]: step 1/2. Its function is as follows. Catalyzes the transfer of endogenously produced octanoic acid from octanoyl-acyl-carrier-protein onto the lipoyl domains of lipoate-dependent enzymes. Lipoyl-ACP can also act as a substrate although octanoyl-ACP is likely to be the physiological substrate. This is Octanoyltransferase from Acidobacterium capsulatum (strain ATCC 51196 / DSM 11244 / BCRC 80197 / JCM 7670 / NBRC 15755 / NCIMB 13165 / 161).